Reading from the N-terminus, the 539-residue chain is Chaperonin GroEL 2 (539 aa).

ATP-binding positions include 30–33 (TLGP), Lys51, 87–91 (DGTTT), Gly415, 480–482 (NAA), and Asp496.

It belongs to the chaperonin (HSP60) family. In terms of assembly, forms a cylinder of 14 subunits composed of two heptameric rings stacked back-to-back. Interacts with the co-chaperonin GroES.

Its subcellular location is the cytoplasm. It carries out the reaction ATP + H2O + a folded polypeptide = ADP + phosphate + an unfolded polypeptide.. Its function is as follows. Together with its co-chaperonin GroES, plays an essential role in assisting protein folding. The GroEL-GroES system forms a nano-cage that allows encapsulation of the non-native substrate proteins and provides a physical environment optimized to promote and accelerate protein folding. The sequence is that of Chaperonin GroEL 2 from Sphingopyxis alaskensis (strain DSM 13593 / LMG 18877 / RB2256) (Sphingomonas alaskensis).